We begin with the raw amino-acid sequence, 590 residues long: RNA-binding protein 47 (590 aa).

Positions 1–21 (MTAEDSTTAMNSDPTVGSSTK) are enriched in polar residues. The segment at 1–26 (MTAEDSTTAMNSDPTVGSSTKVPEGV) is disordered. RRM domains are found at residues 71–149 (CEVF…CSVD), 151–233 (CRLF…WAEP), and 246–318 (KILY…LAKP). Asymmetric dimethylarginine; alternate occurs at positions 396 and 407. 2 positions are modified to omega-N-methylarginine; alternate: Arg396 and Arg407.

The protein belongs to the RRM RBM47 family. As to quaternary structure, homodimer. Interacts with A1CF. Interacts with APOBEC1; form an mRNA editing complex. Interacts with RBPMS.

It localises to the nucleus. It is found in the cytoplasm. Single-stranded RNA-binding protein that functions in a variety of RNA processes, including alternative splicing, RNA stabilization, and RNA editing. Functions as an enzyme-substrate adapter for the cytidine deaminase APOBEC1. With APOBEC1 forms an mRNA editing complex involved into cytidine to uridine editing of a variety of mRNA molecules. Through the binding of their 3'UTR, also stabilizes a variety of mRNAs and regulates the expression of genes such as the interferon alpha/beta receptor and interleukin-10. Also involved in the alternative splicing of several genes including TJP1. Binds the pre-mRNA (U)GCAUG consensus sequences in downstream intronic regions of alternative exons regulating their exclusion and inclusion into mRNAs. Independently of its RNA-binding activity, could negatively regulate MAVS by promoting its lysosomal degradation. The polypeptide is RNA-binding protein 47 (Rattus norvegicus (Rat)).